A 492-amino-acid polypeptide reads, in one-letter code: Ammonium transporter MEP1 (492 aa).

Topologically, residues methionine 1–threonine 18 are extracellular. Residues valine 19–leucine 39 traverse the membrane as a helical segment. Over tyrosine 40 to alanine 49 the chain is Cytoplasmic. Residues leucine 50–tryptophan 70 form a helical membrane-spanning segment. Residues glycine 71 to glutamate 109 are Extracellular-facing. Residues leucine 110–alanine 130 form a helical membrane-spanning segment. Topologically, residues threonine 131–histidine 140 are cytoplasmic. A helical transmembrane segment spans residues methionine 141 to serine 161. Over proline 162 to tryptophan 174 the chain is Extracellular. Residues alanine 175–leucine 195 traverse the membrane as a helical segment. The Cytoplasmic portion of the chain corresponds to glycine 196–asparagine 210. A helical transmembrane segment spans residues valine 211–alanine 231. Residues serine 232–serine 240 are Extracellular-facing. A helical transmembrane segment spans residues valine 241–leucine 261. Over aspartate 262–lysine 268 the chain is Cytoplasmic. A helical transmembrane segment spans residues tryptophan 269–serine 289. Residue glycine 290 is a topological domain, extracellular. The chain crosses the membrane as a helical span at residues cysteine 291–alanine 311. The Cytoplasmic segment spans residues threonine 312–glycine 331. A helical membrane pass occupies residues valine 332–methionine 352. Residues aspartate 353–glutamine 373 are Extracellular-facing. Residues isoleucine 374 to valine 394 traverse the membrane as a helical segment. At leucine 395–arginine 492 the chain is on the cytoplasmic side. Phosphoserine occurs at positions 442 and 445. A disordered region spans residues histidine 455–arginine 492. Positions serine 461–glycine 473 are enriched in low complexity.

Belongs to the ammonia transporter channel (TC 1.A.11.2) family.

The protein localises to the membrane. Its function is as follows. Transporter for ammonium (both charged and uncharged NH3 and NH4) to use as a nitrogen source. Can also transport methylamine. The affinity of MEP1 is about twenty times lower than that of MEP2. MEP3 has the lowest affinity. The chain is Ammonium transporter MEP1 (MEP1) from Saccharomyces cerevisiae (strain ATCC 204508 / S288c) (Baker's yeast).